The sequence spans 111 residues: Secreted transmembrane peptide 5 (111 aa).

The N-terminal stretch at 1-46 (MRLSVFYIFITRLAMTKNATKNEMGSKSPNIVALVLPLLLILYTLS) is a signal peptide. The short motif at 66 to 79 (IVWTPHSNSCGGSP) is the SCOOP motif element. A SxS motif essential for MIK2 binding motif is present at residues 72–74 (SNS). The segment at 89 to 111 (TTGRPCRRSRPPGTNIPVSDQSP) is disordered.

This sequence belongs to the serine rich endogenous peptide (SCOOP) phytocytokine family. Interacts with MIK2 (via extracellular leucine-rich repeat domain); this interaction triggers the formation of complex between MIK2 and the BAK1/SERK3 and SERK4 coreceptors, and subsequent BAK1 activation by phosphorylation. Mostly expressed in leaves, and, to a lower extent, in roots, stems, siliques, seeds and flowers.

It localises to the cell membrane. The protein localises to the secreted. The protein resides in the extracellular space. It is found in the apoplast. Functionally, brassicaceae-specific phytocytokine (plant endogenous peptide released into the apoplast) perceived by MIK2 in a BAK1/SERK3 and SERK4 coreceptors-dependent manner, that modulates various physiological and antimicrobial processes including growth prevention and reactive oxygen species (ROS) response regulation. The polypeptide is Secreted transmembrane peptide 5 (Arabidopsis thaliana (Mouse-ear cress)).